A 502-amino-acid polypeptide reads, in one-letter code: 2-isopropylmalate synthase (502 aa).

Positions 1, 189, 191, and 225 each coordinate Mn(2+). The region spanning 1–254 is the Pyruvate carboxyltransferase domain; that stretch reads DGEQALQASL…STNINHKEIY (254 aa). A regulatory domain region spans residues 379–502; the sequence is CLKFFSVQSI…VNKNLKNLKK (124 aa).

This sequence belongs to the alpha-IPM synthase/homocitrate synthase family. LeuA type 1 subfamily. As to quaternary structure, homodimer. The cofactor is Mn(2+).

Its subcellular location is the cytoplasm. It carries out the reaction 3-methyl-2-oxobutanoate + acetyl-CoA + H2O = (2S)-2-isopropylmalate + CoA + H(+). It functions in the pathway amino-acid biosynthesis; L-leucine biosynthesis; L-leucine from 3-methyl-2-oxobutanoate: step 1/4. Its function is as follows. Catalyzes the condensation of the acetyl group of acetyl-CoA with 3-methyl-2-oxobutanoate (2-ketoisovalerate) to form 3-carboxy-3-hydroxy-4-methylpentanoate (2-isopropylmalate). The protein is 2-isopropylmalate synthase of Buchnera aphidicola subsp. Uroleucon sonchi.